Consider the following 1026-residue polypeptide: Multidrug resistance protein MdtC (1026 aa).

The next 11 helical transmembrane spans lie at 15-35, 333-353, 360-380, 387-407, 431-451, 463-483, 528-548, 853-873, 897-917, 953-973, and 984-1004; these read ILIA…LPVA, EVEE…FLFL, LIPA…MYLC, LSLM…IVVL, VGFT…PLLL, FAVT…TLTP, LVGV…IAIP, LILI…LYES, LFNA…IGIV, PIMM…LSGG, and ITIV…TPVV.

Belongs to the resistance-nodulation-cell division (RND) (TC 2.A.6) family. MdtC subfamily. As to quaternary structure, part of a tripartite efflux system composed of MdtA, MdtB and MdtC. MdtC forms a heteromultimer with MdtB.

It localises to the cell inner membrane. The chain is Multidrug resistance protein MdtC from Salmonella choleraesuis (strain SC-B67).